A 146-amino-acid chain; its full sequence is D-aminoacyl-tRNA deacylase (146 aa).

The Gly-cisPro motif, important for rejection of L-amino acids signature appears at 137-138; the sequence is GP.

Belongs to the DTD family. As to quaternary structure, homodimer.

The protein localises to the cytoplasm. The enzyme catalyses glycyl-tRNA(Ala) + H2O = tRNA(Ala) + glycine + H(+). It carries out the reaction a D-aminoacyl-tRNA + H2O = a tRNA + a D-alpha-amino acid + H(+). Its function is as follows. An aminoacyl-tRNA editing enzyme that deacylates mischarged D-aminoacyl-tRNAs. Also deacylates mischarged glycyl-tRNA(Ala), protecting cells against glycine mischarging by AlaRS. Acts via tRNA-based rather than protein-based catalysis; rejects L-amino acids rather than detecting D-amino acids in the active site. By recycling D-aminoacyl-tRNA to D-amino acids and free tRNA molecules, this enzyme counteracts the toxicity associated with the formation of D-aminoacyl-tRNA entities in vivo and helps enforce protein L-homochirality. This Hahella chejuensis (strain KCTC 2396) protein is D-aminoacyl-tRNA deacylase.